The following is a 300-amino-acid chain: Protein orai (300 aa).

The Cytoplasmic portion of the chain corresponds to 1-128; that stretch reads MPRSHDPSRV…SKAQLKASSR (128 aa). A disordered region spans residues 58–82; the sequence is QPPSSGGGSRNVGGGDGAAGNSKNG. A compositionally biased stretch (gly residues) spans 62–75; sequence SGGGSRNVGGGDGA. A helical transmembrane segment spans residues 129-146; sequence TSALLAGFAMVCLVELQY. Residues 147-153 lie on the Extracellular side of the membrane; sequence DDSTSKP. Residues 154-174 traverse the membrane as a helical segment; it reads LLIVLGVVTSLLVSVHLLALM. At 175–205 the chain is on the cytoplasmic side; the sequence is MSTCILPYMEATGCTQDSPHLKLKFYIDLSW. The chain crosses the membrane as a helical span at residues 206–226; the sequence is LFSTCIGLLLFLVEIGVIFYV. Topologically, residues 227-237 are extracellular; sequence KFTAVGYPTAG. A helical membrane pass occupies residues 238 to 258; that stretch reads YITTAMLIPVGIVFVLFSYLI. Over 259–300 the chain is Cytoplasmic; the sequence is HKNRVSHSLGRFKDKVDTMKQFLDVEANLQKSTIAPSTIRDI.

The protein belongs to the Orai family.

Its subcellular location is the membrane. Functionally, ca(2+) release-activated Ca(2+)-like (CRAC-like) channel subunit which mediates Ca(2+) influx and increase in Ca(2+)-selective current by synergy with the Ca(2+) sensor, stim-1. Required for Ca(2+) and IP3-dependent contractile activity of sheath cells and the spermatheca. Affects brood size and somatic cell function. This chain is Protein orai (orai-1), found in Caenorhabditis briggsae.